Reading from the N-terminus, the 332-residue chain is UDP-galactose/UDP-glucose transporter 1 (332 aa).

A run of 8 helical transmembrane segments spans residues Ile-11–Leu-31, His-49–Ile-69, Ala-80–Ile-100, Val-112–Ile-132, Thr-135–Leu-155, Ile-206–Pro-226, Ile-252–Ala-272, and Trp-301–Leu-317. The Di-lysine motif signature appears at Lys-327–Ser-332.

The protein belongs to the nucleotide-sugar transporter family. UDP-galactose:UMP antiporter (TC 2.A.7.11) subfamily.

Its subcellular location is the endoplasmic reticulum membrane. In terms of biological role, essential sugar transporter required for the transport of UDP-galactose and UDP-glucose from the cytoplasm into the Golgi and the endoplasmic reticulum, to ensure quality control of protein folding. Essential for pollen development and involved in embryo sac progress. The protein is UDP-galactose/UDP-glucose transporter 1 of Arabidopsis thaliana (Mouse-ear cress).